The following is a 292-amino-acid chain: Glutamyl-Q tRNA(Asp) synthetase (292 aa).

Residues 11-15 (RFAPS) and Glu-47 each bind L-glutamate. The 'HIGH' region signature appears at 14–24 (PSPTGPLHFGS). Residues Cys-103, Cys-105, Tyr-116, and Cys-120 each coordinate Zn(2+). Residues Tyr-173 and Arg-191 each coordinate L-glutamate. The 'KMSKS' region signature appears at 229-233 (KLSKQ). Lys-232 contacts ATP.

This sequence belongs to the class-I aminoacyl-tRNA synthetase family. GluQ subfamily. It depends on Zn(2+) as a cofactor.

Catalyzes the tRNA-independent activation of glutamate in presence of ATP and the subsequent transfer of glutamate onto a tRNA(Asp). Glutamate is transferred on the 2-amino-5-(4,5-dihydroxy-2-cyclopenten-1-yl) moiety of the queuosine in the wobble position of the QUC anticodon. In Acinetobacter baylyi (strain ATCC 33305 / BD413 / ADP1), this protein is Glutamyl-Q tRNA(Asp) synthetase.